A 453-amino-acid chain; its full sequence is Allantoinase (453 aa).

Positions 59, 61, 146, 186, 242, and 315 each coordinate Zn(2+). The residue at position 146 (K146) is an N6-carboxylysine.

Belongs to the metallo-dependent hydrolases superfamily. Allantoinase family. In terms of assembly, homotetramer. Requires Zn(2+) as cofactor. Carboxylation allows a single lysine to coordinate two zinc ions.

The enzyme catalyses (S)-allantoin + H2O = allantoate + H(+). It participates in nitrogen metabolism; (S)-allantoin degradation; allantoate from (S)-allantoin: step 1/1. Functionally, catalyzes the conversion of allantoin (5-ureidohydantoin) to allantoic acid by hydrolytic cleavage of the five-member hydantoin ring. This chain is Allantoinase, found in Escherichia coli (strain K12 / MC4100 / BW2952).